The sequence spans 141 residues: Nucleoside diphosphate kinase (141 aa).

ATP contacts are provided by K11, F59, R87, T93, R104, and N114. H117 acts as the Pros-phosphohistidine intermediate in catalysis.

Belongs to the NDK family. Homotetramer. Mg(2+) is required as a cofactor.

The protein resides in the cytoplasm. The enzyme catalyses a 2'-deoxyribonucleoside 5'-diphosphate + ATP = a 2'-deoxyribonucleoside 5'-triphosphate + ADP. The catalysed reaction is a ribonucleoside 5'-diphosphate + ATP = a ribonucleoside 5'-triphosphate + ADP. Its function is as follows. Major role in the synthesis of nucleoside triphosphates other than ATP. The ATP gamma phosphate is transferred to the NDP beta phosphate via a ping-pong mechanism, using a phosphorylated active-site intermediate. The chain is Nucleoside diphosphate kinase from Polynucleobacter asymbioticus (strain DSM 18221 / CIP 109841 / QLW-P1DMWA-1) (Polynucleobacter necessarius subsp. asymbioticus).